Consider the following 314-residue polypeptide: MLENYKHTTVLLDEAVNGLNIRSGGIYIDGTFGRGGHSRLILSQLGPEGRLLAIDRDPQAIEAAKAIDDPRFSIIHGPFSAMAEYVAELGLTGQIDGVLLDLGVSSPQLDDPERGFSFMRDGPLDMRMDPTRGLSAAEWLMKAEADDIVWVLKTFGEERFAKRIARAIVERNRTEPMTRTKELAELIAAASPVREKHKHPATRSFQAIRIYINSELEEIERALEGALSVLAPQGRLSVISFHSLEDRIVKRFIRHQSRGPQVPAGLPLTEEQLRSQGGQTLKAVGKKLMPSEAEVAENPRARSSVLRFAERLPA.

S-adenosyl-L-methionine is bound by residues 35-37, D55, F79, D101, and Q108; that span reads GGH.

Belongs to the methyltransferase superfamily. RsmH family.

The protein localises to the cytoplasm. The catalysed reaction is cytidine(1402) in 16S rRNA + S-adenosyl-L-methionine = N(4)-methylcytidine(1402) in 16S rRNA + S-adenosyl-L-homocysteine + H(+). In terms of biological role, specifically methylates the N4 position of cytidine in position 1402 (C1402) of 16S rRNA. The protein is Ribosomal RNA small subunit methyltransferase H of Pectobacterium carotovorum subsp. carotovorum (strain PC1).